The chain runs to 272 residues: Glutamate 5-kinase (272 aa).

Residue lysine 15 participates in ATP binding. Residues serine 55, aspartate 142, and asparagine 158 each coordinate substrate. ATP is bound by residues 178–179 and 220–226; these read SD and TGGMLSK.

This sequence belongs to the glutamate 5-kinase family.

It localises to the cytoplasm. The enzyme catalyses L-glutamate + ATP = L-glutamyl 5-phosphate + ADP. Its pathway is amino-acid biosynthesis; L-proline biosynthesis; L-glutamate 5-semialdehyde from L-glutamate: step 1/2. Functionally, catalyzes the transfer of a phosphate group to glutamate to form L-glutamate 5-phosphate. The polypeptide is Glutamate 5-kinase (Streptococcus equi subsp. zooepidemicus (strain H70)).